We begin with the raw amino-acid sequence, 82 residues long: Escargot/snail protein homolog (82 aa).

4 C2H2-type zinc fingers span residues 1–5 (HLQFH), 18–40 (FSCK…IRTH), 44–66 (CKCD…IRTH), and 72–82 (FSCQHCHRAFA).

The protein belongs to the snail C2H2-type zinc-finger protein family.

The protein resides in the nucleus. This Bradysia coprophila (Dark-winged fungus gnat) protein is Escargot/snail protein homolog.